The primary structure comprises 104 residues: MEMMRNPKNTKQEIKLAFFYIIDGAIIALMLVLASYMPKVVPVGGFGRIMFYVLFGTFGLFLCIKPHNSPTNRNIFVILDMLKMDNKNYHPIEVNTISSETKRK.

A run of 2 helical transmembrane segments spans residues 16–36 (LAFF…LASY) and 44–64 (GGFG…FLCI).

It localises to the cell membrane. This is an uncharacterized protein from Bacillus anthracis.